A 360-amino-acid polypeptide reads, in one-letter code: Photosystem II protein D1 (360 aa).

3 helical membrane passes run 29-46 (YVGW…TATT), 118-133 (QFLI…QWEL), and 142-156 (WICV…ARTA). Position 126 (Y126) interacts with pheophytin a. [CaMn4O5] cluster contacts are provided by D170 and E189. A helical membrane pass occupies residues 197–218 (FHMLGVAGVFGGSLFSAMHGSL). Residue H198 participates in chlorophyll a binding. A quinone-binding positions include H215 and 264–265 (SF). Position 215 (H215) interacts with Fe cation. H272 contributes to the Fe cation binding site. A helical transmembrane segment spans residues 274–288 (FLGAWPVIGIWFTAM). Residues H332, E333, D342, and A344 each contribute to the [CaMn4O5] cluster site. A propeptide spanning residues 345-360 (SGEQAPVALTAPAING) is cleaved from the precursor.

Belongs to the reaction center PufL/M/PsbA/D family. In terms of assembly, PSII is composed of 1 copy each of membrane proteins PsbA, PsbB, PsbC, PsbD, PsbE, PsbF, PsbH, PsbI, PsbJ, PsbK, PsbL, PsbM, PsbT, PsbX, PsbY, PsbZ, Psb30/Ycf12, peripheral proteins PsbO, CyanoQ (PsbQ), PsbU, PsbV and a large number of cofactors. It forms dimeric complexes. Requires The D1/D2 heterodimer binds P680, chlorophylls that are the primary electron donor of PSII, and subsequent electron acceptors. It shares a non-heme iron and each subunit binds pheophytin, quinone, additional chlorophylls, carotenoids and lipids. D1 provides most of the ligands for the Mn4-Ca-O5 cluster of the oxygen-evolving complex (OEC). There is also a Cl(-1) ion associated with D1 and D2, which is required for oxygen evolution. The PSII complex binds additional chlorophylls, carotenoids and specific lipids. as cofactor. Tyr-161 forms a radical intermediate that is referred to as redox-active TyrZ, YZ or Y-Z. In terms of processing, C-terminally processed by CtpA; processing is essential to allow assembly of the oxygen-evolving complex and thus photosynthetic growth.

It localises to the cellular thylakoid membrane. It catalyses the reaction 2 a plastoquinone + 4 hnu + 2 H2O = 2 a plastoquinol + O2. In terms of biological role, photosystem II (PSII) is a light-driven water:plastoquinone oxidoreductase that uses light energy to abstract electrons from H(2)O, generating O(2) and a proton gradient subsequently used for ATP formation. It consists of a core antenna complex that captures photons, and an electron transfer chain that converts photonic excitation into a charge separation. The D1/D2 (PsbA/PsbD) reaction center heterodimer binds P680, the primary electron donor of PSII as well as several subsequent electron acceptors. The chain is Photosystem II protein D1 from Synechocystis sp. (strain PCC 6714) (Aphanocapsa sp. (strain PCC 6714)).